Here is a 284-residue protein sequence, read N- to C-terminus: Diaminopimelate epimerase (284 aa).

Residues N20, Q53, and N73 each coordinate substrate. C82 acts as the Proton donor in catalysis. Substrate-binding positions include 83–84 (GN), N167, N200, and 218–219 (ER). C227 functions as the Proton acceptor in the catalytic mechanism. A substrate-binding site is contributed by 228–229 (GS).

This sequence belongs to the diaminopimelate epimerase family. In terms of assembly, homodimer.

It localises to the cytoplasm. The catalysed reaction is (2S,6S)-2,6-diaminopimelate = meso-2,6-diaminopimelate. It participates in amino-acid biosynthesis; L-lysine biosynthesis via DAP pathway; DL-2,6-diaminopimelate from LL-2,6-diaminopimelate: step 1/1. In terms of biological role, catalyzes the stereoinversion of LL-2,6-diaminopimelate (L,L-DAP) to meso-diaminopimelate (meso-DAP), a precursor of L-lysine and an essential component of the bacterial peptidoglycan. This is Diaminopimelate epimerase from Xanthomonas euvesicatoria pv. vesicatoria (strain 85-10) (Xanthomonas campestris pv. vesicatoria).